Here is a 299-residue protein sequence, read N- to C-terminus: MSFDNLRYLESEAIHIIREVAATFSNPVVLYSIGKDSSVLLHLAMKAFFPGKPPFPFLHVDTRWKFREMIDFRDRMMREMDLKLIVHVNQDGIDQGISPFRDGSNVHTHMMKTMALRQALDKFSFDAALAGARREEEKSRAKERIFSIRNAQHAWDPKRQRPEMWRTYNTRVSAGETMRVFPLSNWTELDVWEYNQKENIPVVPLYFAAPRPVVQRGAGMIMVDDERMPLEPDETVTQRMIRFRTLGCYPLTGAIESSAETVPEILREIVEARTSERQSRLIDFDEAGAMEKKKREGYF.

The protein belongs to the PAPS reductase family. CysD subfamily. Sulfate-activating enzymes, NodP and NodQ, may be physically associated.

It catalyses the reaction sulfate + ATP + H(+) = adenosine 5'-phosphosulfate + diphosphate. Proposed to provide activated sulfate for transfer to nod factor. The sequence is that of Sulfate adenylyltransferase subunit 2 (nodP) from Rhizobium tropici.